The sequence spans 434 residues: Glutamyl-tRNA reductase (434 aa).

Substrate contacts are provided by residues 52-55 (TCNR), S115, 120-122 (ETQ), and Q126. C53 functions as the Nucleophile in the catalytic mechanism. Residue 195–200 (GAGEMI) coordinates NADP(+).

It belongs to the glutamyl-tRNA reductase family. As to quaternary structure, homodimer.

It catalyses the reaction (S)-4-amino-5-oxopentanoate + tRNA(Glu) + NADP(+) = L-glutamyl-tRNA(Glu) + NADPH + H(+). It participates in porphyrin-containing compound metabolism; protoporphyrin-IX biosynthesis; 5-aminolevulinate from L-glutamyl-tRNA(Glu): step 1/2. Catalyzes the NADPH-dependent reduction of glutamyl-tRNA(Glu) to glutamate 1-semialdehyde (GSA). This chain is Glutamyl-tRNA reductase, found in Cupriavidus metallidurans (strain ATCC 43123 / DSM 2839 / NBRC 102507 / CH34) (Ralstonia metallidurans).